We begin with the raw amino-acid sequence, 413 residues long: 2,3-bisphosphoglycerate-independent phosphoglycerate mutase (413 aa).

The protein belongs to the BPG-independent phosphoglycerate mutase family. A-PGAM subfamily.

The enzyme catalyses (2R)-2-phosphoglycerate = (2R)-3-phosphoglycerate. Its pathway is carbohydrate degradation; glycolysis; pyruvate from D-glyceraldehyde 3-phosphate: step 3/5. Its function is as follows. Catalyzes the interconversion of 2-phosphoglycerate and 3-phosphoglycerate. The chain is 2,3-bisphosphoglycerate-independent phosphoglycerate mutase from Sulfurisphaera tokodaii (strain DSM 16993 / JCM 10545 / NBRC 100140 / 7) (Sulfolobus tokodaii).